The following is a 343-amino-acid chain: Holliday junction branch migration complex subunit RuvB (343 aa).

The tract at residues 1–26 (MKEKILTFSSDPSSPVTRHETEEDTG) is disordered. Positions 3 to 193 (EKILTFSSDP…FGIFRKFDFY (191 aa)) are large ATPase domain (RuvB-L). The segment covering 7-16 (TFSSDPSSPV) has biased composition (polar residues). Residues L32, R33, G74, K77, T78, T79, 140–142 (EDF), R183, Y193, and R230 contribute to the ATP site. T78 lines the Mg(2+) pocket. The segment at 194–264 (SRQDLARIVS…AIDDALALEG (71 aa)) is small ATPAse domain (RuvB-S). The segment at 267–343 (EKGLTGLDRS…YRHLGVQWRG (77 aa)) is head domain (RuvB-H). R322 and R327 together coordinate DNA.

The protein belongs to the RuvB family. Homohexamer. Forms an RuvA(8)-RuvB(12)-Holliday junction (HJ) complex. HJ DNA is sandwiched between 2 RuvA tetramers; dsDNA enters through RuvA and exits via RuvB. An RuvB hexamer assembles on each DNA strand where it exits the tetramer. Each RuvB hexamer is contacted by two RuvA subunits (via domain III) on 2 adjacent RuvB subunits; this complex drives branch migration. In the full resolvosome a probable DNA-RuvA(4)-RuvB(12)-RuvC(2) complex forms which resolves the HJ.

It localises to the cytoplasm. The catalysed reaction is ATP + H2O = ADP + phosphate + H(+). The RuvA-RuvB-RuvC complex processes Holliday junction (HJ) DNA during genetic recombination and DNA repair, while the RuvA-RuvB complex plays an important role in the rescue of blocked DNA replication forks via replication fork reversal (RFR). RuvA specifically binds to HJ cruciform DNA, conferring on it an open structure. The RuvB hexamer acts as an ATP-dependent pump, pulling dsDNA into and through the RuvAB complex. RuvB forms 2 homohexamers on either side of HJ DNA bound by 1 or 2 RuvA tetramers; 4 subunits per hexamer contact DNA at a time. Coordinated motions by a converter formed by DNA-disengaged RuvB subunits stimulates ATP hydrolysis and nucleotide exchange. Immobilization of the converter enables RuvB to convert the ATP-contained energy into a lever motion, pulling 2 nucleotides of DNA out of the RuvA tetramer per ATP hydrolyzed, thus driving DNA branch migration. The RuvB motors rotate together with the DNA substrate, which together with the progressing nucleotide cycle form the mechanistic basis for DNA recombination by continuous HJ branch migration. Branch migration allows RuvC to scan DNA until it finds its consensus sequence, where it cleaves and resolves cruciform DNA. The protein is Holliday junction branch migration complex subunit RuvB of Desulfosudis oleivorans (strain DSM 6200 / JCM 39069 / Hxd3) (Desulfococcus oleovorans).